The chain runs to 7031 residues: Extracellular matrix-binding protein EbhB (7031 aa).

An N-terminal signal peptide occupies residues 1–39; it reads MNYRDKIQKFSIRKYTVGTFSTVIATLVFLGFNTSQAHA. The segment covering 41 to 59 has biased composition (polar residues); that stretch reads ETNQPASVVKQKQQSNNEQ. 5 disordered regions span residues 41-86, 99-152, 250-277, 1342-1373, and 2418-2438; these read ETNQ…HENE, KVAQ…GNDN, PQRQ…PRSV, NNIT…ATTD, and TITP…TLTA. Positions 65–80 are enriched in low complexity; the sequence is SQVQNSQNSQNGQSLS. The span at 99–117 shows a compositional bias: polar residues; sequence KVAQSSTTNDEQPASQNVN. Over residues 130–140 the composition is skewed to basic and acidic residues; the sequence is PDKEQSKHKQN. Composition is skewed to polar residues over residues 141-151, 250-266, 1360-1373, and 2427-2438; these read ESQSANKNGND, PQRQ…QTRS, FRTT…ATTD, and HSVSSNPSTLTA. 38 consecutive FIVAR domains span residues 2524 to 2580, 2610 to 2666, 2687 to 2750, 2780 to 2836, 2864 to 2919, 2947 to 3002, 3030 to 3085, 3154 to 3212, 3280 to 3339, 3407 to 3465, 3533 to 3591, 3659 to 3717, 3785 to 3843, 3911 to 3969, 4037 to 4095, 4163 to 4221, 4289 to 4347, 4415 to 4473, 4541 to 4599, 4667 to 4725, 4793 to 4851, 4919 to 4977, 5045 to 5103, 5171 to 5229, 5297 to 5355, 5423 to 5481, 5549 to 5607, 5675 to 5733, 5801 to 5859, 5927 to 5985, 6053 to 6111, 6179 to 6236, 6304 to 6362, 6430 to 6488, 6556 to 6614, 6682 to 6740, 6818 to 6866, and 6934 to 6992; these read AKNH…VSDA, SKNN…ISDE, DTHA…VQSA, AKTK…IAAE, AKTQ…IRQN, AKNQ…INTN, AKTQ…INDK, AMTK…VNQK, AMTG…VNNA, AMGN…VNRA, AMGN…VTEA, AMNT…ITQK, AMAS…VEAA, AMGN…VEQA, AMGT…VTAA, AMKG…ITQA, QMGN…VEAA, AMAN…VENA, AMGT…INQI, AMGQ…VDRA, AMNS…VDNA, AMGA…INGM, AMTA…VNSA, AMKG…ITQV, AMHS…VEQA, AMGQ…VERA, AMTA…VTNA, AMKG…INQA, AMTN…VETA, AMSN…VEQA, AMNQ…INQK, AMGN…VQAA, AMGQ…VEAA, AMQR…VEQA, AMDQ…VTAA, AMNQ…VTQA, DKDQ…VEAA, and AMGN…VEAA.

The polypeptide is Extracellular matrix-binding protein EbhB (ebhB) (Staphylococcus aureus (strain Newman)).